The following is a 372-amino-acid chain: Transcription factor YY2 (372 aa).

Residues 32 to 102 (MEDIPTESVQ…SDNQLGNDLE (71 aa)) form a mediates transcriptional activation region. Over residues 126–136 (SAASTSTSTQS) the composition is skewed to low complexity. Disordered regions lie at residues 126-172 (SAAS…WEQK) and 186-210 (TMWS…PPDY). The segment covering 137–146 (RSKKPSKKPS) has biased composition (basic residues). Composition is skewed to polar residues over residues 154–165 (EANPAGSSSSLG) and 186–196 (TMWSPNDNNDQ). Residues 237 to 372 (EFTKVKPKRS…LTHVKTKNNP (136 aa)) are mediates transcriptional repression. 4 C2H2-type zinc fingers span residues 254–278 (VPCS…LHIH), 283–305 (HVCA…QLVH), 311–335 (FQCT…LRIH), and 341–365 (FVCP…ILTH).

It belongs to the YY transcription factor family. In terms of tissue distribution, expressed in kidney, liver, spleen and testis but not in colon.

The protein resides in the nucleus. Functions as a multifunctional transcription factor that may exhibit positive and negative control on a large number of genes. May antagonize YY1 and function in development and differentiation. In Homo sapiens (Human), this protein is Transcription factor YY2 (YY2).